A 358-amino-acid polypeptide reads, in one-letter code: Histidinol-phosphate aminotransferase (358 aa).

N6-(pyridoxal phosphate)lysine is present on lysine 218.

The protein belongs to the class-II pyridoxal-phosphate-dependent aminotransferase family. Histidinol-phosphate aminotransferase subfamily. In terms of assembly, homodimer. Requires pyridoxal 5'-phosphate as cofactor.

The catalysed reaction is L-histidinol phosphate + 2-oxoglutarate = 3-(imidazol-4-yl)-2-oxopropyl phosphate + L-glutamate. The protein operates within amino-acid biosynthesis; L-histidine biosynthesis; L-histidine from 5-phospho-alpha-D-ribose 1-diphosphate: step 7/9. This Dehalococcoides mccartyi (strain CBDB1) protein is Histidinol-phosphate aminotransferase.